A 183-amino-acid chain; its full sequence is ATP synthase subunit delta (183 aa).

The protein belongs to the ATPase delta chain family. F-type ATPases have 2 components, F(1) - the catalytic core - and F(0) - the membrane proton channel. F(1) has five subunits: alpha(3), beta(3), gamma(1), delta(1), epsilon(1). F(0) has three main subunits: a(1), b(2) and c(10-14). The alpha and beta chains form an alternating ring which encloses part of the gamma chain. F(1) is attached to F(0) by a central stalk formed by the gamma and epsilon chains, while a peripheral stalk is formed by the delta and b chains.

Its subcellular location is the cell inner membrane. F(1)F(0) ATP synthase produces ATP from ADP in the presence of a proton or sodium gradient. F-type ATPases consist of two structural domains, F(1) containing the extramembraneous catalytic core and F(0) containing the membrane proton channel, linked together by a central stalk and a peripheral stalk. During catalysis, ATP synthesis in the catalytic domain of F(1) is coupled via a rotary mechanism of the central stalk subunits to proton translocation. Its function is as follows. This protein is part of the stalk that links CF(0) to CF(1). It either transmits conformational changes from CF(0) to CF(1) or is implicated in proton conduction. The protein is ATP synthase subunit delta of Nitratidesulfovibrio vulgaris (strain ATCC 29579 / DSM 644 / CCUG 34227 / NCIMB 8303 / VKM B-1760 / Hildenborough) (Desulfovibrio vulgaris).